We begin with the raw amino-acid sequence, 338 residues long: Increasing suppression factor 1 (338 aa).

Positions 50 to 70 are enriched in low complexity; sequence QNSSKSNNSHHSSSTNAGNTS. The interval 50 to 75 is disordered; that stretch reads QNSSKSNNSHHSSSTNAGNTSRHIGN. Ser119 is subject to Phosphoserine. Over residues 267–306 the composition is skewed to low complexity; sequence SLLSNGSSSSPLQTRNNSYSNSLVKSPSNSSLNTSVASSN. Residues 267-322 are disordered; that stretch reads SLLSNGSSSSPLQTRNNSYSNSLVKSPSNSSLNTSVASSNEESSPHTSNCLEERNP. Over residues 307–316 the composition is skewed to polar residues; that stretch reads EESSPHTSNC.

Belongs to the ISF1/MBR1 family.

In terms of biological role, could influence the NAM7/UPF1 function, possibly at the level of mRNA turnover. Participates in mitochondrial biogenesis. In Saccharomyces cerevisiae (strain ATCC 204508 / S288c) (Baker's yeast), this protein is Increasing suppression factor 1 (ISF1).